Consider the following 248-residue polypeptide: Probable transcriptional regulatory protein Pcar_2335 (248 aa).

It belongs to the TACO1 family.

The protein resides in the cytoplasm. This is Probable transcriptional regulatory protein Pcar_2335 from Syntrophotalea carbinolica (strain DSM 2380 / NBRC 103641 / GraBd1) (Pelobacter carbinolicus).